The sequence spans 134 residues: ATP synthase epsilon chain, chloroplastic (134 aa).

It belongs to the ATPase epsilon chain family. F-type ATPases have 2 components, CF(1) - the catalytic core - and CF(0) - the membrane proton channel. CF(1) has five subunits: alpha(3), beta(3), gamma(1), delta(1), epsilon(1). CF(0) has three main subunits: a, b and c.

The protein localises to the plastid. It localises to the chloroplast thylakoid membrane. Produces ATP from ADP in the presence of a proton gradient across the membrane. This chain is ATP synthase epsilon chain, chloroplastic, found in Nymphaea alba (White water-lily).